A 339-amino-acid chain; its full sequence is RNA 3'-terminal phosphate cyclase (339 aa).

ATP contacts are provided by residues Q101 and 283-286 (HMSD). The active-site Tele-AMP-histidine intermediate is the H307.

This sequence belongs to the RNA 3'-terminal cyclase family. Type 1 subfamily.

The protein resides in the cytoplasm. It carries out the reaction a 3'-end 3'-phospho-ribonucleotide-RNA + ATP = a 3'-end 2',3'-cyclophospho-ribonucleotide-RNA + AMP + diphosphate. In terms of biological role, catalyzes the conversion of 3'-phosphate to a 2',3'-cyclic phosphodiester at the end of RNA. The mechanism of action of the enzyme occurs in 3 steps: (A) adenylation of the enzyme by ATP; (B) transfer of adenylate to an RNA-N3'P to produce RNA-N3'PP5'A; (C) and attack of the adjacent 2'-hydroxyl on the 3'-phosphorus in the diester linkage to produce the cyclic end product. The biological role of this enzyme is unknown but it is likely to function in some aspects of cellular RNA processing. This is RNA 3'-terminal phosphate cyclase from Sulfurisphaera tokodaii (strain DSM 16993 / JCM 10545 / NBRC 100140 / 7) (Sulfolobus tokodaii).